The following is an 874-amino-acid chain: Alanine--tRNA ligase (874 aa).

His562, His566, Cys665, and His669 together coordinate Zn(2+).

Belongs to the class-II aminoacyl-tRNA synthetase family. Zn(2+) serves as cofactor.

It is found in the cytoplasm. It carries out the reaction tRNA(Ala) + L-alanine + ATP = L-alanyl-tRNA(Ala) + AMP + diphosphate. Functionally, catalyzes the attachment of alanine to tRNA(Ala) in a two-step reaction: alanine is first activated by ATP to form Ala-AMP and then transferred to the acceptor end of tRNA(Ala). Also edits incorrectly charged Ser-tRNA(Ala) and Gly-tRNA(Ala) via its editing domain. In Pseudomonas entomophila (strain L48), this protein is Alanine--tRNA ligase.